The sequence spans 142 residues: Large ribosomal subunit protein uL11 (142 aa).

The protein belongs to the universal ribosomal protein uL11 family. As to quaternary structure, part of the ribosomal stalk of the 50S ribosomal subunit. Interacts with L10 and the large rRNA to form the base of the stalk. L10 forms an elongated spine to which L12 dimers bind in a sequential fashion forming a multimeric L10(L12)X complex. One or more lysine residues are methylated.

Forms part of the ribosomal stalk which helps the ribosome interact with GTP-bound translation factors. This chain is Large ribosomal subunit protein uL11, found in Rhizobium meliloti (strain 1021) (Ensifer meliloti).